A 311-amino-acid chain; its full sequence is Aspartate carbamoyltransferase catalytic subunit (311 aa).

Residues Arg55 and Thr56 each contribute to the carbamoyl phosphate site. Lys85 contributes to the L-aspartate binding site. Carbamoyl phosphate is bound by residues Arg106, His135, and Gln138. 2 residues coordinate L-aspartate: Arg168 and Arg230. Residues Leu268 and Pro269 each contribute to the carbamoyl phosphate site.

This sequence belongs to the aspartate/ornithine carbamoyltransferase superfamily. ATCase family. Heterododecamer (2C3:3R2) of six catalytic PyrB chains organized as two trimers (C3), and six regulatory PyrI chains organized as three dimers (R2).

It catalyses the reaction carbamoyl phosphate + L-aspartate = N-carbamoyl-L-aspartate + phosphate + H(+). It participates in pyrimidine metabolism; UMP biosynthesis via de novo pathway; (S)-dihydroorotate from bicarbonate: step 2/3. In terms of biological role, catalyzes the condensation of carbamoyl phosphate and aspartate to form carbamoyl aspartate and inorganic phosphate, the committed step in the de novo pyrimidine nucleotide biosynthesis pathway. The sequence is that of Aspartate carbamoyltransferase catalytic subunit from Klebsiella pneumoniae subsp. pneumoniae (strain ATCC 700721 / MGH 78578).